We begin with the raw amino-acid sequence, 337 residues long: Tryptophan--tRNA ligase (337 aa).

ATP is bound by residues 11 to 13 (QPT) and 19 to 20 (GN). The 'HIGH' region motif lies at 12–20 (PTGNLHLGN). D135 provides a ligand contact to L-tryptophan. ATP-binding positions include 147–149 (GED), V190, and 199–203 (KMSKS). The 'KMSKS' region signature appears at 199-203 (KMSKS).

Belongs to the class-I aminoacyl-tRNA synthetase family. As to quaternary structure, homodimer.

It is found in the cytoplasm. It carries out the reaction tRNA(Trp) + L-tryptophan + ATP = L-tryptophyl-tRNA(Trp) + AMP + diphosphate + H(+). Catalyzes the attachment of tryptophan to tRNA(Trp). The protein is Tryptophan--tRNA ligase of Synechocystis sp. (strain ATCC 27184 / PCC 6803 / Kazusa).